The following is a 956-amino-acid chain: Protein translocase subunit SecA (956 aa).

ATP-binding positions include Gln-87, 105–109, and Asp-524; that span reads GEGKT. Zn(2+) is bound by residues Cys-940, Cys-942, Cys-951, and His-952.

Belongs to the SecA family. Monomer and homodimer. Part of the essential Sec protein translocation apparatus which comprises SecA, SecYEG and auxiliary proteins SecDF-YajC and YidC. Zn(2+) serves as cofactor.

The protein resides in the cell inner membrane. Its subcellular location is the cytoplasm. It carries out the reaction ATP + H2O + cellular proteinSide 1 = ADP + phosphate + cellular proteinSide 2.. Functionally, part of the Sec protein translocase complex. Interacts with the SecYEG preprotein conducting channel. Has a central role in coupling the hydrolysis of ATP to the transfer of proteins into and across the cell membrane, serving both as a receptor for the preprotein-SecB complex and as an ATP-driven molecular motor driving the stepwise translocation of polypeptide chains across the membrane. The protein is Protein translocase subunit SecA of Beijerinckia indica subsp. indica (strain ATCC 9039 / DSM 1715 / NCIMB 8712).